A 326-amino-acid polypeptide reads, in one-letter code: D-alanine--D-alanine ligase (326 aa).

The 200-residue stretch at I121 to E320 folds into the ATP-grasp domain. An ATP-binding site is contributed by V149–S204. Mg(2+) is bound by residues E275, E287, and N289.

It belongs to the D-alanine--D-alanine ligase family. It depends on Mg(2+) as a cofactor. The cofactor is Mn(2+).

The protein localises to the cytoplasm. The enzyme catalyses 2 D-alanine + ATP = D-alanyl-D-alanine + ADP + phosphate + H(+). Its pathway is cell wall biogenesis; peptidoglycan biosynthesis. Its function is as follows. Cell wall formation. This chain is D-alanine--D-alanine ligase, found in Christiangramia forsetii (strain DSM 17595 / CGMCC 1.15422 / KT0803) (Gramella forsetii).